Consider the following 640-residue polypeptide: Choline O-acetyltransferase (640 aa).

S17 is subject to Phosphoserine. H334 (proton acceptor) is an active-site residue. S365 is modified (phosphoserine). Residues 412 to 424, S450, and Q551 contribute to the CoA site; that span reads GKTF…YSPD. The segment at 614–640 is disordered; it reads CSSRQPADSKPPAPKEKARGPSQAKQS.

This sequence belongs to the carnitine/choline acetyltransferase family. As to quaternary structure, monomer.

The enzyme catalyses choline + acetyl-CoA = acetylcholine + CoA. Functionally, catalyzes the reversible synthesis of acetylcholine (ACh) from acetyl CoA and choline at cholinergic synapses. In Rattus norvegicus (Rat), this protein is Choline O-acetyltransferase (Chat).